We begin with the raw amino-acid sequence, 961 residues long: E3 ubiquitin-protein ligase TRIM37 (961 aa).

Residue M1 is modified to N-acetylmethionine. The RING-type; degenerate zinc finger occupies 15–55; sequence CFICMEKLRDARLCPHCSKLCCFSCIRRWLTEQRAQCPHCR. The B box-type zinc finger occupies 90 to 132; it reads NEKDKCENHHEKLSVFCWTCKKCICHQCALWGGMHGGHTFKPL. Zn(2+)-binding residues include C95, H98, C117, and H124. Positions 132-234 form a coiled coil; the sequence is LAEIYEQHVT…VEHQLRSCSK (103 aa). The MATH domain maps to 276 to 403; the sequence is YDSATFVLEN…NDTVILRFQV (128 aa). Positions 419-450 form a coiled coil; sequence ITQLEAAQTGYIQQINNLKERLTIELSRTQKS. 5 disordered regions span residues 447–514, 529–561, 645–665, 776–811, and 874–961; these read TQKS…HHEL, VNHL…SGEN, SLLQ…KQQA, AVDS…SPRA, and LESH…GGGR. At S454 the chain carries Phosphoserine. Over residues 504-514 the composition is skewed to basic and acidic residues; it reads KIQNEDYHHEL. Residues 535–545 show a composition bias toward low complexity; it reads SSSSASSTATS. Positions 548–561 are enriched in acidic residues; it reads EENDIDEETMSGEN. Over residues 776–787 the composition is skewed to basic and acidic residues; it reads AVDSGENSRSKG. Residues 795-806 are compositionally biased toward low complexity; it reads GSSGSSQSGSRH. Residues 903-915 show a composition bias toward acidic residues; it reads SDIECDTENEEQE.

The protein belongs to the TRIM/RBCC family. In terms of assembly, associates with the PRC2/EED-EZH2 complex. Post-translationally, auto-ubiquitinated. Highly expressed in testis and brain. In embryonic tissues, expressed in epithelia, including ducts of the developing pancreas, epithelium of the midgut and nasal epithelium. In adult, detected in the central and peripheral nervous systems, including enteric ganglia, retina and the adrenal medulla (at protein level).

It localises to the chromosome. The protein localises to the cytoplasm. Its subcellular location is the perinuclear region. It is found in the peroxisome membrane. It carries out the reaction S-ubiquitinyl-[E2 ubiquitin-conjugating enzyme]-L-cysteine + [acceptor protein]-L-lysine = [E2 ubiquitin-conjugating enzyme]-L-cysteine + N(6)-ubiquitinyl-[acceptor protein]-L-lysine.. The protein operates within protein modification; protein ubiquitination. Its function is as follows. E3 ubiquitin-protein ligase required to prevent centriole reduplication. Probably acts by ubiquitinating positive regulators of centriole reduplication. Mediates monoubiquitination of 'Lys-119' of histone H2A (H2AK119Ub), a specific tag for epigenetic transcriptional repression: associates with some Polycomb group (PcG) multiprotein PRC2-like complex and mediates repression of target genes. Also acts as a positive regulator of peroxisome import by mediating monoubiquitination of PEX5 at 'Lys-472': monoubiquitination promotes PEX5 stabilitation by preventing its polyubiquitination and degradation by the proteasome. This is E3 ubiquitin-protein ligase TRIM37 from Mus musculus (Mouse).